Here is a 485-residue protein sequence, read N- to C-terminus: Amidophosphoribosyltransferase, chloroplastic (485 aa).

The transit peptide at 1–18 (KTTNTFASVNDDEKPREE) directs the protein to the chloroplast. The active-site Nucleophile is the Cys19. In terms of domain architecture, Glutamine amidotransferase type-2 spans 19 to 237 (CGVVGIYGDP…PGEVVVVDHT (219 aa)). Residue Cys253 participates in [4Fe-4S] cluster binding. Mg(2+) contacts are provided by Ser300, Asp362, and Asp363. Positions 399, 450, and 453 each coordinate [4Fe-4S] cluster.

In the C-terminal section; belongs to the purine/pyrimidine phosphoribosyltransferase family. Mg(2+) serves as cofactor. It depends on [4Fe-4S] cluster as a cofactor.

It localises to the plastid. It is found in the chloroplast. The enzyme catalyses 5-phospho-beta-D-ribosylamine + L-glutamate + diphosphate = 5-phospho-alpha-D-ribose 1-diphosphate + L-glutamine + H2O. It participates in purine metabolism; IMP biosynthesis via de novo pathway; N(1)-(5-phospho-D-ribosyl)glycinamide from 5-phospho-alpha-D-ribose 1-diphosphate: step 1/2. In Vigna aconitifolia (Moth bean), this protein is Amidophosphoribosyltransferase, chloroplastic (PUR1).